Reading from the N-terminus, the 2055-residue chain is Multiple PDZ domain protein (2055 aa).

Positions 1–63 (MLETIDKNRA…SLQQLKDQVN (63 aa)) constitute an L27 domain. The PDZ 1 domain maps to 138–225 (IFELLKPPCG…TVQLVIARGS (88 aa)). The residue at position 231 (Ser-231) is a Phosphoserine. Positions 258–338 (TIELVNDGSG…RVKLMIARGA (81 aa)) constitute a PDZ 2 domain. Low complexity predominate over residues 348–360 (LGITLSSSTSSTS). Residues 348 to 372 (LGITLSSSTSSTSEMRVDASTQKND) are disordered. PDZ domains are found at residues 378-464 (DVEL…MRKG), 546-627 (VAHV…CRRT), and 693-779 (SIEL…VAKP). Residues Ser-783 and Ser-1066 each carry the phosphoserine modification. The region spanning 996 to 1077 (TVTIAKGSSS…IGPDIKITYV (82 aa)) is the PDZ 6 domain. The segment at 1111-1130 (PELPEREEGEGEESELQNAA) is disordered. Positions 1139–1231 (RVELWREPSK…PVVFMVQSII (93 aa)) constitute a PDZ 7 domain. Arg-1158 is subject to Omega-N-methylarginine. Residues 1264–1274 (LTTDQAPSQSE) show a composition bias toward polar residues. Residues 1264-1299 (LTTDQAPSQSESETEKPALCNVPPSSPSVFSEMGSD) are disordered. A PDZ 8 domain is found at 1338–1421 (VIELEKGQSG…KVKIIFIRNA (84 aa)). Residues 1435–1445 (ADSPSSTSDSP) are compositionally biased toward low complexity. The tract at residues 1435–1459 (ADSPSSTSDSPQNKEVEPCSTTSAS) is disordered. A PDZ 9 domain is found at 1471 to 1552 (QLELPKDQGG…TVKLTVRAEN (82 aa)). Residues 1557 to 1597 (AVPSSAVTVSGERKDNSQTPAVPAPDLEPIPSTSRSSTPAV) are disordered. PDZ domains lie at 1614 to 1697 (TIEI…YRDE) and 1710 to 1792 (TIEL…GRVK). The interval 1795–1834 (PFHSERRPSQSSQVSESSLSSFTPPLSGINTSESLESNSK) is disordered. Residues Ser-1803 and Ser-1809 each carry the phosphoserine modification. Low complexity predominate over residues 1803 to 1815 (SQSSQVSESSLSS). Positions 1816 to 1834 (FTPPLSGINTSESLESNSK) are enriched in polar residues. 2 consecutive PDZ domains span residues 1847–1933 (TVEI…VAGG) and 1972–2055 (TITL…MVLS).

As to quaternary structure, interacts with CLDN5, DLG4, GRIN1, SYNGAP1, CAMK2A and CAMK2B, HTR2A, HTR2B, HTR2C, PLEKHA1/TAPP1 and PLEKHA2/TAPP2. Interacts with F11R/JAM, CLDN1, NG2, CXADR, CRB1, MPP4 and PALS1. Interacts with FAT4 (via cytoplasmic domain). Interacts with DLL1. In terms of tissue distribution, in the brain, it is strongly expressed in the choroid plexus. Within the hippocampal formation, strongest expression was seen in the soma of CA1-4 pyramidal cells. Expressed in most neocortical regions with the strongest expression in piriform cortex and amygdaloid nuclei but also detected in the subiculum and olfactory bulb. In the cerebellum, the highest level of expression was found in Purkinje cells. Moderately expressed in the granular layer and molecular layer. Expressed in the pontine nuclei, parts of spinal trigeminal nuclei, and the principal sensory trigeminal nuclei of the metencephalon. Expressed in all thalamic and hypothalamic nuclei, and the substantia nigra (at protein level). Ubiquitously expressed.

It localises to the cell membrane. The protein resides in the apical cell membrane. It is found in the postsynaptic density. Its subcellular location is the cell projection. The protein localises to the dendrite. It localises to the cell junction. The protein resides in the tight junction. It is found in the synapse. Its subcellular location is the synaptosome. Its function is as follows. Member of the NMDAR signaling complex that may play a role in control of AMPAR potentiation and synaptic plasticity in excitatory synapses. Promotes clustering of HT2RC at the cell surface. The polypeptide is Multiple PDZ domain protein (Mpdz) (Mus musculus (Mouse)).